The sequence spans 467 residues: Uronate isomerase (467 aa).

The protein belongs to the metallo-dependent hydrolases superfamily. Uronate isomerase family.

The catalysed reaction is D-glucuronate = D-fructuronate. It catalyses the reaction aldehydo-D-galacturonate = keto-D-tagaturonate. The protein operates within carbohydrate metabolism; pentose and glucuronate interconversion. This is Uronate isomerase from Actinobacillus succinogenes (strain ATCC 55618 / DSM 22257 / CCUG 43843 / 130Z).